Reading from the N-terminus, the 484-residue chain is Glutamyl-tRNA(Gln) amidotransferase subunit A (484 aa).

Residues Lys76 and Ser151 each act as charge relay system in the active site. Ser175 acts as the Acyl-ester intermediate in catalysis.

This sequence belongs to the amidase family. GatA subfamily. Heterotrimer of A, B and C subunits.

It carries out the reaction L-glutamyl-tRNA(Gln) + L-glutamine + ATP + H2O = L-glutaminyl-tRNA(Gln) + L-glutamate + ADP + phosphate + H(+). In terms of biological role, allows the formation of correctly charged Gln-tRNA(Gln) through the transamidation of misacylated Glu-tRNA(Gln) in organisms which lack glutaminyl-tRNA synthetase. The reaction takes place in the presence of glutamine and ATP through an activated gamma-phospho-Glu-tRNA(Gln). This chain is Glutamyl-tRNA(Gln) amidotransferase subunit A, found in Saccharophagus degradans (strain 2-40 / ATCC 43961 / DSM 17024).